Here is a 200-residue protein sequence, read N- to C-terminus: FMN-dependent NADH:quinone oxidoreductase (200 aa).

Residues serine 10 and 95 to 98 each bind FMN; that span reads MYNF.

Belongs to the azoreductase type 1 family. In terms of assembly, homodimer. It depends on FMN as a cofactor.

It carries out the reaction 2 a quinone + NADH + H(+) = 2 a 1,4-benzosemiquinone + NAD(+). It catalyses the reaction N,N-dimethyl-1,4-phenylenediamine + anthranilate + 2 NAD(+) = 2-(4-dimethylaminophenyl)diazenylbenzoate + 2 NADH + 2 H(+). Quinone reductase that provides resistance to thiol-specific stress caused by electrophilic quinones. Functionally, also exhibits azoreductase activity. Catalyzes the reductive cleavage of the azo bond in aromatic azo compounds to the corresponding amines. This Alteromonas mediterranea (strain DSM 17117 / CIP 110805 / LMG 28347 / Deep ecotype) protein is FMN-dependent NADH:quinone oxidoreductase.